The following is a 734-amino-acid chain: MATKFPKFSQALAQDPATRRIWYGIATAHDLESHDGMTEENLYQKIFASHFGHLAIIFLWTSGNLFHVAWQGNFQQWVLNPLKVKPIAHAIWDPHFGQSAIKAFTRGGVSYPVNIATSGVYHWWYTVGMRTNEDLYFGALGLLVLSTTLLFAGWLHLQPKFRPGIAWFKNNESRLNHHLSGLFGVSSLAWSGHLIHVAIPESRGQHIRWNNFTSTLPHPEGLTPFFTGNWGLYAENPDTAQHIFGTSEGAGTAILTFLGGFHPQTQSMWLTDIAHHHLAIAVVFIFAGHMYRTNWGIGHSMKEILDAHVPPKGRLGAGHRGLFETITDSLHMQLGLALASLGVATSLVAQHMYALPSYAFMAKDYVTQAALYTHHQYIAGFLMVGAFAHGAIFFVRDYDPEVNKDNVLARMLQHKEAIISHLSWVSLFLGFHTLGLYIHNDVCVAFGTPEKQILFEPVFAQFIQAASGKALYGFDVLLSSSTSAASVASSKIWLPGWMEAINSGKNSLFLTIGPGDFLVHHAIALGLHTTTLILVKGALDARGSKLMPDKKDFGYSFPCDGPGRGGTCDISAWDAFYLAMFWMLNTISWVTFYWHWKHLTVWGGNAAAFNESSTYIMGWLRDYLWLNSSPLINGYNAFGMNAQAVWAWMFLFGHLIWATGFMFLISWRGYWQELIETLVWAHERTPIANLVKWRDKPVALSIVQARLVGLAHFTVGFIFTFAPFVIASTTGKFA.

Transmembrane regions (helical) follow at residues 46–69 (IFAS…FHVA), 135–158 (LYFG…LHLQ), 175–199 (LNHH…HVAI), 273–291 (IAHH…GHMY), 330–353 (LHMQ…QHMY), 369–395 (AALY…IFFV), 417–439 (AIIS…LYIH), and 517–535 (FLVH…LILV). The [4Fe-4S] cluster site is built by Cys-559 and Cys-568. 2 consecutive transmembrane segments (helical) span residues 575-596 (AFYL…YWHW) and 643-665 (QAVW…MFLI). His-654, Met-662, and Tyr-670 together coordinate chlorophyll a. Trp-671 lines the phylloquinone pocket. A helical membrane pass occupies residues 707-727 (LVGLAHFTVGFIFTFAPFVIA).

The protein belongs to the PsaA/PsaB family. As to quaternary structure, the PsaA/B heterodimer binds the P700 chlorophyll special pair and subsequent electron acceptors. PSI consists of a core antenna complex that captures photons, and an electron transfer chain that converts photonic excitation into a charge separation. The eukaryotic PSI reaction center is composed of at least 11 subunits. P700 is a chlorophyll a/chlorophyll a' dimer, A0 is one or more chlorophyll a, A1 is one or both phylloquinones and FX is a shared 4Fe-4S iron-sulfur center. is required as a cofactor.

The protein localises to the plastid. It localises to the chloroplast thylakoid membrane. The enzyme catalyses reduced [plastocyanin] + hnu + oxidized [2Fe-2S]-[ferredoxin] = oxidized [plastocyanin] + reduced [2Fe-2S]-[ferredoxin]. In terms of biological role, psaA and PsaB bind P700, the primary electron donor of photosystem I (PSI), as well as the electron acceptors A0, A1 and FX. PSI is a plastocyanin/cytochrome c6-ferredoxin oxidoreductase, converting photonic excitation into a charge separation, which transfers an electron from the donor P700 chlorophyll pair to the spectroscopically characterized acceptors A0, A1, FX, FA and FB in turn. Oxidized P700 is reduced on the lumenal side of the thylakoid membrane by plastocyanin or cytochrome c6. The polypeptide is Photosystem I P700 chlorophyll a apoprotein A2 (Emiliania huxleyi (Coccolithophore)).